We begin with the raw amino-acid sequence, 35 residues long: Photosystem II reaction center protein T (35 aa).

The helical transmembrane segment at 3-23 (ALVYTFLLVSTLGIIFFAIFF) threads the bilayer.

Belongs to the PsbT family. As to quaternary structure, PSII is composed of 1 copy each of membrane proteins PsbA, PsbB, PsbC, PsbD, PsbE, PsbF, PsbH, PsbI, PsbJ, PsbK, PsbL, PsbM, PsbT, PsbY, PsbZ, Psb30/Ycf12, at least 3 peripheral proteins of the oxygen-evolving complex and a large number of cofactors. It forms dimeric complexes.

Its subcellular location is the plastid. The protein localises to the chloroplast thylakoid membrane. Functionally, found at the monomer-monomer interface of the photosystem II (PS II) dimer, plays a role in assembly and dimerization of PSII. PSII is a light-driven water plastoquinone oxidoreductase, using light energy to abstract electrons from H(2)O, generating a proton gradient subsequently used for ATP formation. The sequence is that of Photosystem II reaction center protein T from Bassia hyssopifolia (Fivehorn smotherweed).